The following is a 1061-amino-acid chain: Transmembrane protease serine 9 (1061 aa).

The Cytoplasmic segment spans residues 3–31 (PAAPDLQPVPEVTKGVPVPTPDSGCCRAA). Residues 32–52 (VTTVVAISVASLTLGVLSAFL) form a helical membrane-spanning segment. Topologically, residues 53 to 1061 (SAQGVQVEHT…LGWIGQNIRE (1009 aa)) are extracellular. An LDL-receptor class A domain is found at 155 to 192 (HCPGNAFSCQNSQCVSKENPECDDRVDCSDGSDEAQCD). Intrachain disulfides connect Cys156-Cys168, Cys163-Cys182, Cys176-Cys191, and Cys230-Cys246. Residues 205-438 (IVGGAEAAPG…LRDWILEVTS (234 aa)) form the Peptidase S1 1 domain. Catalysis depends on charge relay system residues His245 and Asp294. 3 cysteine pairs are disulfide-bonded: Cys328–Cys395, Cys360–Cys374, and Cys385–Cys414. Residue Ser389 is the Charge relay system of the active site. The tract at residues 443-499 (PVVPTEAPAPITPSTPWPTSPESRVPNTTAKPTVAPTPAPLHPSTAAKPQECGARPA) is disordered. Residues 452–461 (PITPSTPWPT) show a composition bias toward pro residues. Over residues 462–476 (SPESRVPNTTAKPTV) the composition is skewed to low complexity. An N-linked (GlcNAc...) asparagine glycan is attached at Asn469. The region spanning 506 to 738 (IVGGISAVSG…LKDWILKAMS (233 aa)) is the Peptidase S1 2 domain. Cysteines 531 and 547 form a disulfide. Catalysis depends on His546, which acts as the Charge relay system. N-linked (GlcNAc...) asparagine glycosylation is present at Asn549. Asp594 acts as the Charge relay system in catalysis. Cystine bridges form between Cys628-Cys695, Cys660-Cys674, and Cys685-Cys714. N-linked (GlcNAc...) asparagine glycans are attached at residues Asn640 and Asn665. The Charge relay system role is filled by Ser689. Residues 740 to 752 (DPSSTAHPHTSST) are compositionally biased toward low complexity. Disordered regions lie at residues 740–771 (DPSS…IPEA) and 790–810 (LNTT…APGT). An N-linked (GlcNAc...) asparagine glycan is attached at Asn791. Residues 792–808 (TTLSARSTTTRRQTPAP) are compositionally biased toward low complexity. Positions 830 to 1060 (IVGGSAASLG…VLGWIGQNIR (231 aa)) constitute a Peptidase S1 3 domain. Intrachain disulfides connect Cys856–Cys872, Cys951–Cys1017, Cys982–Cys996, and Cys1007–Cys1036.

The protein belongs to the peptidase S1 family. Post-translationally, proteolytically cleaved to generate 3 independent serine protease chains. The cleaved chains may remain attached to the membrane thanks to disulfide bonds. It is unclear whether cleavage always takes place.

The protein resides in the cell membrane. Its activity is regulated as follows. Inhibited by serine protease inhibitors PMSF and 4-(2-aminoethyl)benzenesulfonyl fluoride, but not by EDTA. Serase-1 and serase-2 are serine proteases that hydrolyze the peptides N-t-Boc-Gln-Ala-Arg-AMC and N-t-Boc-Gln-Gly-Arg-AMC. In contrast, N-t-Boc-Ala-Phe-Lys-AMC and N-t-Boc-Ala-Pro-Ala-AMC are not significantly hydrolyzed. This chain is Transmembrane protease serine 9 (Tmprss9), found in Rattus norvegicus (Rat).